The primary structure comprises 124 residues: Fluoride-specific ion channel FluC 1 (124 aa).

The next 4 membrane-spanning stretches (helical) occupy residues 4-24, 36-56, 67-87, and 103-123; these read VLIG…GAWI, GTFA…GLVV, VVLG…LLDL, and AALS…LGWG. Na(+) is bound by residues Gly-75 and Thr-78.

It belongs to the fluoride channel Fluc/FEX (TC 1.A.43) family.

It is found in the cell membrane. It catalyses the reaction fluoride(in) = fluoride(out). Na(+) is not transported, but it plays an essential structural role and its presence is essential for fluoride channel function. Fluoride-specific ion channel. Important for reducing fluoride concentration in the cell, thus reducing its toxicity. The sequence is that of Fluoride-specific ion channel FluC 1 from Symbiobacterium thermophilum (strain DSM 24528 / JCM 14929 / IAM 14863 / T).